The chain runs to 72 residues: UPF0270 protein KPK_0377 (72 aa).

It belongs to the UPF0270 family.

In Klebsiella pneumoniae (strain 342), this protein is UPF0270 protein KPK_0377.